The sequence spans 337 residues: tRNA N6-adenosine threonylcarbamoyltransferase (337 aa).

Fe cation contacts are provided by histidine 110 and histidine 114. Residues 132 to 136, aspartate 165, glycine 178, aspartate 182, and asparagine 268 contribute to the substrate site; that span reads VVSGG. Aspartate 293 contributes to the Fe cation binding site.

It belongs to the KAE1 / TsaD family. Fe(2+) serves as cofactor.

It localises to the cytoplasm. The enzyme catalyses L-threonylcarbamoyladenylate + adenosine(37) in tRNA = N(6)-L-threonylcarbamoyladenosine(37) in tRNA + AMP + H(+). Functionally, required for the formation of a threonylcarbamoyl group on adenosine at position 37 (t(6)A37) in tRNAs that read codons beginning with adenine. Is involved in the transfer of the threonylcarbamoyl moiety of threonylcarbamoyl-AMP (TC-AMP) to the N6 group of A37, together with TsaE and TsaB. TsaD likely plays a direct catalytic role in this reaction. This chain is tRNA N6-adenosine threonylcarbamoyltransferase, found in Sulfurihydrogenibium sp. (strain YO3AOP1).